Here is a 281-residue protein sequence, read N- to C-terminus: Streptomycin biosynthesis protein StrF (281 aa).

It functions in the pathway antibiotic biosynthesis; streptomycin biosynthesis. Functionally, may be involved in the formation of N-methyl-L-glucosamine. The polypeptide is Streptomycin biosynthesis protein StrF (strF) (Streptomyces griseus).